A 472-amino-acid polypeptide reads, in one-letter code: Serine incorporator 3 (472 aa).

The Extracellular segment spans residues 1–95 (MGAVLGVFSL…KECDVLVRYK (95 aa)). Asparagine 34 carries an N-linked (GlcNAc...) asparagine glycan. Residues 96 to 116 (AVYRISFALAVFFFAFSLLML) traverse the membrane as a helical segment. Residues 117-131 (NVKTSKDPRAAIHNG) are Cytoplasmic-facing. A helical transmembrane segment spans residues 132-152 (FWFFKIAAIVGVMVGSFYIPG). At 153–158 (GHFNTA) the chain is on the extracellular side. The chain crosses the membrane as a helical span at residues 159 to 179 (WFVIGMVGAAFFILIQLVLLV). The Cytoplasmic portion of the chain corresponds to 180 to 202 (DFAHSWNESWVNRMEEGNPKCWY). Residues 203–223 (AALLSVTSLFYILSIIFAGLL) form a helical membrane-spanning segment. At 224 to 238 (YTYYTKPDGCTENKF) the chain is on the extracellular side. The helical transmembrane segment at 239–259 (FISFNLILCVVISVLSIHPKI) threads the bilayer. Over 260 to 328 (QEHQPRSGLL…APTPAVPLQS (69 aa)) the chain is Cytoplasmic. Residues 329–349 (GPSLNKENFIGLLVFVLSLSY) traverse the membrane as a helical segment. The Extracellular segment spans residues 350–405 (SSIRNSSNSQVSKLTLSGSDSVILRDTAANGASDEEDGRPRRAVDNEREGVQYNYS). A glycan (N-linked (GlcNAc...) asparagine) is linked at asparagine 354. At serine 370 the chain carries Phosphoserine. A glycan (N-linked (GlcNAc...) asparagine) is linked at asparagine 403. Residues 406–426 (MFHLMLCSASLYIMMTLTNWY) form a helical membrane-spanning segment. Residues 427-445 (SPDANFQSMTSKWPAVWVK) are Cytoplasmic-facing. A helical transmembrane segment spans residues 446–466 (ISSSWVCLLLYVWTLVAPLVL). Over 467-472 (TNRDFS) the chain is Extracellular.

Belongs to the TDE1 family. Post-translationally, N-glycosylated.

It is found in the cell membrane. The protein resides in the golgi apparatus membrane. It carries out the reaction a 1,2-diacyl-sn-glycero-3-phospho-L-serine(in) = a 1,2-diacyl-sn-glycero-3-phospho-L-serine(out). The enzyme catalyses a 1,2-diacyl-sn-glycero-3-phosphocholine(in) = a 1,2-diacyl-sn-glycero-3-phosphocholine(out). It catalyses the reaction a 1,2-diacyl-sn-glycero-3-phosphoethanolamine(in) = a 1,2-diacyl-sn-glycero-3-phosphoethanolamine(out). Restriction factor required to restrict infectivity of gammaretroviruses: acts by inhibiting an early step of viral infection. Impairs the penetration of the viral particle into the cytoplasm. Non-ATP-dependent, non-specific lipid transporter for phosphatidylserine, phosphatidylcholine, and phosphatidylethanolamine. Functions as a scramblase that flips lipids in both directions across the membrane. Phospholipid scrambling results in gammaretroviral surface exposure of phosphatidylserine and loss of membrane asymmetry, which leads to loss of infectivity. The polypeptide is Serine incorporator 3 (SERINC3) (Bos taurus (Bovine)).